The sequence spans 112 residues: Nitrogenase iron-iron protein delta chain (112 aa).

Hexamer of two alpha, two beta, and two delta chains. Iron-sulfur cluster serves as cofactor.

The enzyme catalyses N2 + 8 reduced [2Fe-2S]-[ferredoxin] + 16 ATP + 16 H2O = H2 + 8 oxidized [2Fe-2S]-[ferredoxin] + 2 NH4(+) + 16 ADP + 16 phosphate + 6 H(+). Its function is as follows. The key enzymatic reactions in nitrogen fixation are catalyzed by the nitrogenase complex, which has 2 components: the iron protein (component 2) and a component 1 which is either a molybdenum-iron protein, a vanadium-iron, or an iron-iron protein. In Azomonas macrocytogenes (Azotobacter macrocytogenes), this protein is Nitrogenase iron-iron protein delta chain (anfG).